Here is a 160-residue protein sequence, read N- to C-terminus: Peptide deformylase 1 (160 aa).

Residues cysteine 90 and histidine 132 each coordinate Fe cation. Glutamate 133 is a catalytic residue. Histidine 136 is a binding site for Fe cation.

It belongs to the polypeptide deformylase family. Fe(2+) is required as a cofactor.

The enzyme catalyses N-terminal N-formyl-L-methionyl-[peptide] + H2O = N-terminal L-methionyl-[peptide] + formate. Functionally, removes the formyl group from the N-terminal Met of newly synthesized proteins. Requires at least a dipeptide for an efficient rate of reaction. N-terminal L-methionine is a prerequisite for activity but the enzyme has broad specificity at other positions. This is Peptide deformylase 1 (defA) from Bacillus subtilis (strain 168).